Consider the following 118-residue polypeptide: MHEYSIVSALIEQCEQYAKANQATKVTRVEIKLGVMSGVEPALLQTAFETFKLDGICREAKLCMTLQPLVIKCADCQQESVLDERSIVCPACNSYHTRVLDGEEMLLMQLEMEQAEDA.

Position 2 (His2) interacts with Ni(2+). Residues Cys73, Cys76, Cys89, and Cys92 each coordinate Zn(2+).

The protein belongs to the HypA/HybF family.

Functionally, involved in the maturation of [NiFe] hydrogenases. Required for nickel insertion into the metal center of the hydrogenase. In Shewanella oneidensis (strain ATCC 700550 / JCM 31522 / CIP 106686 / LMG 19005 / NCIMB 14063 / MR-1), this protein is Hydrogenase maturation factor HypA.